The following is a 267-amino-acid chain: Hydroxyethylthiazole kinase (267 aa).

A substrate-binding site is contributed by Met-42. Arg-118 and Ser-164 together coordinate ATP. Residue Ala-191 coordinates substrate.

It belongs to the Thz kinase family. It depends on Mg(2+) as a cofactor.

It carries out the reaction 5-(2-hydroxyethyl)-4-methylthiazole + ATP = 4-methyl-5-(2-phosphooxyethyl)-thiazole + ADP + H(+). It functions in the pathway cofactor biosynthesis; thiamine diphosphate biosynthesis; 4-methyl-5-(2-phosphoethyl)-thiazole from 5-(2-hydroxyethyl)-4-methylthiazole: step 1/1. Functionally, catalyzes the phosphorylation of the hydroxyl group of 4-methyl-5-beta-hydroxyethylthiazole (THZ). This Pasteurella multocida (strain Pm70) protein is Hydroxyethylthiazole kinase.